A 207-amino-acid chain; its full sequence is MSTPSVHCLKPSPLHLPSGIPGSPGRQRRHTLPANEFRCLTPEDAAGVFEIEREAFISVSGNCPLNLDEVQHFLTLCPELSLGWFVEGRLVAFIIGSLWDEERLTQESLALHRPRGHSAHLHALAVHRSFRQQGKGSVLLWRYLHHVGAQPAVRRAVLMCEDALVPFYQRFGFHPAGPCAIVVGSLTFTEMHCSLRGHAALRRNSDR.

A disordered region spans residues 1 to 29 (MSTPSVHCLKPSPLHLPSGIPGSPGRQRR). Residues 28-35 (RRHTLPAN) form a YWHAZ-binding region. At threonine 31 the chain carries Phosphothreonine; by PKA. Residues 35–196 (NEFRCLTPED…TFTEMHCSLR (162 aa)) form the N-acetyltransferase domain. Substrate is bound at residue leucine 124. Residues 124–126 (LAV) and 132–137 (QQGKGS) contribute to the acetyl-CoA site. Methionine 159 serves as a coordination point for substrate. Residue 168-170 (YQR) coordinates acetyl-CoA. The residue at position 205 (serine 205) is a Phosphoserine; by PKA.

The protein belongs to the acetyltransferase family. AANAT subfamily. As to quaternary structure, monomer. Interacts with several 14-3-3 proteins, including YWHAB, YWHAE, YWHAG and YWHAZ, preferentially when phosphorylated at Thr-31. Phosphorylation on Ser-205 also allows binding to YWHAZ, but with a 10-fold lower affinity. The interaction with YWHAZ considerably increases affinity for arylalkylamines and acetyl-CoA and protects the enzyme from dephosphorylation and proteasomal degradation. It may also prevent thiol-dependent inactivation. The physiological stoichiometry of the interaction is not clear. In vitro studies show either 1:2 (i.e. 1 AANAT molecule per YWHAZ dimer) or 2:2. In terms of processing, cAMP-dependent phosphorylation on both N-terminal Thr-31 and C-terminal Ser-205 regulates AANAT activity by promoting interaction with 14-3-3 proteins. In terms of tissue distribution, highest expression in the pineal gland, followed by retina. Expressed at much lower levels in brainstem and pituitary gland. AANAT activity also detected at low levels in the olfactory lobe.

It is found in the cytoplasm. The catalysed reaction is a 2-arylethylamine + acetyl-CoA = an N-acetyl-2-arylethylamine + CoA + H(+). It participates in aromatic compound metabolism; melatonin biosynthesis; melatonin from serotonin: step 1/2. Functionally, controls the night/day rhythm of melatonin production in the pineal gland. Catalyzes the N-acetylation of serotonin into N-acetylserotonin, the penultimate step in the synthesis of melatonin. The polypeptide is Serotonin N-acetyltransferase (AANAT) (Ovis aries (Sheep)).